Here is a 518-residue protein sequence, read N- to C-terminus: Reduced folate transporter (518 aa).

N-acetylmethionine is present on Met-1. Over 1–29 (MVPTGQVAEKQACEEPRQDRELKSWRCLV) the chain is Cytoplasmic. The helical transmembrane segment at 30 to 50 (FYLCFFGFMAQLRPGESFITP) threads the bilayer. Folate is bound by residues Ile-48 and Thr-49. Over 51-62 (YLLQQNFTIEQV) the chain is Extracellular. An N-linked (GlcNAc...) asparagine glycan is attached at Asn-56. A helical membrane pass occupies residues 63–85 (TNEIIPVLPYSHLAVLVPIFLLT). Residues 86–89 (DYLR) lie on the Cytoplasmic side of the membrane. A helical membrane pass occupies residues 90–110 (YKPILILQCLSFMCVWLLLLL). At 111–114 (GTSV) the chain is on the extracellular side. The helical transmembrane segment at 115–137 (VHMQLMEVFYSVTMAARIAYSSY) threads the bilayer. Folate contacts are provided by Glu-121 and Arg-131. At 138-151 (IFSLVRPSRYQRMA) the chain is on the cytoplasmic side. The chain crosses the membrane as a helical span at residues 152-176 (SYSRAAVLLGVFTSSVLGQVLWPLE). Val-162 contributes to the folate binding site. Topologically, residues 177 to 181 (QKSQN) are extracellular. A helical membrane pass occupies residues 182-200 (SNMLNYISLGFIIFSLGLS). Residues 201 to 266 (LFLKRPKHSL…LSELVGNLRQ (66 aa)) lie on the Cytoplasmic side of the membrane. A helical membrane pass occupies residues 267–292 (PQLRLWCLWWVFNSAGYYLIVYYVHV). Ala-281, Gly-282, and Ile-286 together coordinate folate. Residues 293–300 (LWSIDKNL) lie on the Extracellular side of the membrane. Residues 301–323 (NYNGAVDAASTLLSAITSFSAGF) traverse the membrane as a helical segment. Topologically, residues 324–329 (VKIRWA) are cytoplasmic. A helical membrane pass occupies residues 330-350 (LWSKLVIASVIAIQAGLVFCM). Topologically, residues 351–353 (YMV) are extracellular. Residues 354-377 (HYVTWVHKIWVLYMTYVLFRGAYQ) traverse the membrane as a helical segment. Tyr-366 and Val-370 together coordinate folate. At 378–391 (FLVPIATFQIASSL) the chain is on the cytoplasmic side. Residues 392–415 (SKELCALVFGINTFLATALKTAIT) traverse the membrane as a helical segment. The interval 407 to 419 (ATALKTAITLVVS) is required for substrate-binding. The Extracellular segment spans residues 416 to 423 (LVVSDKRG). The helical transmembrane segment at 424–448 (LGLKVEKQFCIYSVYFMVLSVICFV) threads the bilayer. At 449-512 (GAVLDGVRYC…DGVEDSEASL (64 aa)) the chain is on the cytoplasmic side. 3 positions are modified to phosphoserine: Ser-473, Ser-478, and Ser-483. A disordered region spans residues 480-518 (QVPSMQDGGLGGLQPSAPQLLPEDGVEDSEASLRAEAKA).

Belongs to the reduced folate carrier (RFC) transporter (TC 2.A.48) family.

The protein resides in the cell membrane. It is found in the apical cell membrane. Its subcellular location is the basolateral cell membrane. It carries out the reaction 5-amino-1-(5-phospho-beta-D-ribosyl)imidazole-4-carboxamide(in) + (6S)-5-methyl-5,6,7,8-tetrahydrofolate(out) = 5-amino-1-(5-phospho-beta-D-ribosyl)imidazole-4-carboxamide(out) + (6S)-5-methyl-5,6,7,8-tetrahydrofolate(in). Its function is as follows. Antiporter that mediates the import of reduced folates, driven by the export of organic anions. Also acts as an importer of immunoreactive cyclic dinucleotides, but with a lower transporter activity. Mechanistically, acts as a secondary active transporter, which exports intracellular organic anions down their concentration gradients to facilitate the uptake of its substrates. Has high affinity for N5-methyltetrahydrofolate, the predominant circulating form of folate. Also mediates the import of antifolate drug methotrexate. 5-amino-4-imidazolecarboxamide riboside (AICAR), when phosphorylated to AICAR monophosphate, can serve as an organic anion for antiporter activity. The sequence is that of Reduced folate transporter from Cricetulus griseus (Chinese hamster).